The primary structure comprises 332 residues: Malate dehydrogenase (332 aa).

NAD(+)-binding positions include 16-17, D43, and G90; that span reads QI. R99 contributes to the oxaloacetate binding site. The NAD(+) site is built by Q113 and N132. Residues N132, R163, H188, and S243 each contribute to the oxaloacetate site. H188 (proton acceptor) is an active-site residue.

The protein belongs to the LDH/MDH superfamily. MDH type 2 family. Homodimer.

It is found in the cytoplasm. It carries out the reaction (S)-malate + NAD(+) = oxaloacetate + NADH + H(+). Its function is as follows. Catalyzes the reduction of the carbonyl group of oxalacetic acid. No activity with pulegone. The chain is Malate dehydrogenase (MD1) from Nicotiana tabacum (Common tobacco).